The chain runs to 131 residues: Insertion element IS1 protein InsB (131 aa).

The protein belongs to the transposase 27 family.

Absolutely required for transposition of IS1. This is Insertion element IS1 protein InsB (insB1) from Shigella flexneri.